We begin with the raw amino-acid sequence, 664 residues long: DNA ligase (664 aa).

NAD(+)-binding positions include 32–36 and 80–81; these read DKEYD and SL. Lysine 122 (N6-AMP-lysine intermediate) is an active-site residue. Arginine 144, glutamate 178, and lysine 314 together coordinate NAD(+). Residues cysteine 407, cysteine 410, cysteine 423, and cysteine 429 each coordinate Zn(2+). The region spanning 587–664 is the BRCT domain; sequence IDENPFMGKT…NEEEFSNKIK (78 aa).

Belongs to the NAD-dependent DNA ligase family. LigA subfamily. Requires Mg(2+) as cofactor. Mn(2+) is required as a cofactor.

It catalyses the reaction NAD(+) + (deoxyribonucleotide)n-3'-hydroxyl + 5'-phospho-(deoxyribonucleotide)m = (deoxyribonucleotide)n+m + AMP + beta-nicotinamide D-nucleotide.. Functionally, DNA ligase that catalyzes the formation of phosphodiester linkages between 5'-phosphoryl and 3'-hydroxyl groups in double-stranded DNA using NAD as a coenzyme and as the energy source for the reaction. It is essential for DNA replication and repair of damaged DNA. This is DNA ligase from Clostridium botulinum (strain Kyoto / Type A2).